Here is a 236-residue protein sequence, read N- to C-terminus: Large ribosomal subunit protein uL3 (236 aa).

Positions 139–163 (ARDSSTTHEHHRHVGAIGQRKTPGK) are disordered.

It belongs to the universal ribosomal protein uL3 family. As to quaternary structure, part of the 50S ribosomal subunit. Forms a cluster with proteins L14 and L19.

One of the primary rRNA binding proteins, it binds directly near the 3'-end of the 23S rRNA, where it nucleates assembly of the 50S subunit. The sequence is that of Large ribosomal subunit protein uL3 from Anaeromyxobacter sp. (strain Fw109-5).